A 150-amino-acid chain; its full sequence is S-protein homolog 3 (150 aa).

The N-terminal stretch at 1 to 23 (MKNILKTQVHVVVIYLLIKIAFS) is a signal peptide. N-linked (GlcNAc...) asparagine glycosylation is found at N32 and N70.

The protein belongs to the plant self-incompatibility (S1) protein family.

The protein resides in the secreted. This chain is S-protein homolog 3, found in Arabidopsis thaliana (Mouse-ear cress).